The sequence spans 221 residues: Ribosomal RNA large subunit methyltransferase E (221 aa).

S-adenosyl-L-methionine contacts are provided by Gly60, Trp62, Asp89, Asp105, and Asp134. The active-site Proton acceptor is Lys174.

It belongs to the class I-like SAM-binding methyltransferase superfamily. RNA methyltransferase RlmE family.

It is found in the cytoplasm. It carries out the reaction uridine(2552) in 23S rRNA + S-adenosyl-L-methionine = 2'-O-methyluridine(2552) in 23S rRNA + S-adenosyl-L-homocysteine + H(+). Functionally, specifically methylates the uridine in position 2552 of 23S rRNA at the 2'-O position of the ribose in the fully assembled 50S ribosomal subunit. The sequence is that of Ribosomal RNA large subunit methyltransferase E from Cupriavidus taiwanensis (strain DSM 17343 / BCRC 17206 / CCUG 44338 / CIP 107171 / LMG 19424 / R1) (Ralstonia taiwanensis (strain LMG 19424)).